The chain runs to 141 residues: MLMPKRTKWRKQQKGRNRGKSFRGNKIEFGDIAIKAVEAGRIDSRQIEAARITMTRKINRTGKTWIRVFPDKPLTAKPLETRMGKGKGAVDRWVMNIKPGRIIFEMAGVEEELARAALTLAIHKMPFKCKIITAKDSHELY.

The tract at residues 1–23 is disordered; sequence MLMPKRTKWRKQQKGRNRGKSFR.

The protein belongs to the universal ribosomal protein uL16 family. Part of the 50S ribosomal subunit.

Its function is as follows. Binds 23S rRNA and is also seen to make contacts with the A and possibly P site tRNAs. This chain is Large ribosomal subunit protein uL16, found in Sulfurovum sp. (strain NBC37-1).